A 298-amino-acid chain; its full sequence is tRNA pseudouridine synthase B (298 aa).

Residue aspartate 39 is the Nucleophile of the active site.

This sequence belongs to the pseudouridine synthase TruB family. Type 1 subfamily.

The catalysed reaction is uridine(55) in tRNA = pseudouridine(55) in tRNA. In terms of biological role, responsible for synthesis of pseudouridine from uracil-55 in the psi GC loop of transfer RNAs. This is tRNA pseudouridine synthase B from Oenococcus oeni (strain ATCC BAA-331 / PSU-1).